The sequence spans 318 residues: 3'-5' exoribonuclease YhaM (318 aa).

Residues 163-279 (HVVSMLDLAK…LHYIDNLDAK (117 aa)) form the HD domain.

It belongs to the YhaM family.

Its function is as follows. Shows a 3'-5' exoribonuclease activity. The protein is 3'-5' exoribonuclease YhaM of Bacillus cytotoxicus (strain DSM 22905 / CIP 110041 / 391-98 / NVH 391-98).